Reading from the N-terminus, the 422-residue chain is Enolase (422 aa).

Ser-41 serves as a coordination point for Mg(2+). Glu-163 contacts (2R)-2-phosphoglycerate. Glu-204 acts as the Proton donor in catalysis. Mg(2+)-binding residues include Asp-241, Glu-284, and Asp-311. The active-site Proton acceptor is Lys-336. Residues Arg-365, Ser-366, and Lys-387 each contribute to the (2R)-2-phosphoglycerate site.

The protein belongs to the enolase family. As to quaternary structure, homodimer. Component of the RNA degradosome, a multiprotein complex involved in RNA processing and mRNA degradation. The cofactor is Mg(2+).

Its subcellular location is the cytoplasm. It is found in the secreted. It localises to the cell surface. The enzyme catalyses (2R)-2-phosphoglycerate = phosphoenolpyruvate + H2O. Its pathway is carbohydrate degradation; glycolysis; pyruvate from D-glyceraldehyde 3-phosphate: step 4/5. Its function is as follows. Catalyzes the reversible conversion of 2-phosphoglycerate (2-PG) into phosphoenolpyruvate (PEP). It is essential for the degradation of carbohydrates via glycolysis. The chain is Enolase from Legionella pneumophila subsp. pneumophila (strain Philadelphia 1 / ATCC 33152 / DSM 7513).